Reading from the N-terminus, the 131-residue chain is Large-conductance mechanosensitive channel (131 aa).

3 helical membrane-spanning segments follow: residues 8-28 (FAMR…GAFG), 30-50 (IVSS…LGGV), and 67-87 (GMFI…FVFV).

It belongs to the MscL family. As to quaternary structure, homopentamer.

It localises to the cell membrane. Functionally, channel that opens in response to stretch forces in the membrane lipid bilayer. May participate in the regulation of osmotic pressure changes within the cell. This is Large-conductance mechanosensitive channel from Geobacillus sp. (strain WCH70).